We begin with the raw amino-acid sequence, 37 residues long: Fructose-bisphosphate aldolase A (37 aa).

The protein belongs to the class I fructose-bisphosphate aldolase family. In terms of assembly, tetramer.

The enzyme catalyses beta-D-fructose 1,6-bisphosphate = D-glyceraldehyde 3-phosphate + dihydroxyacetone phosphate. Its pathway is carbohydrate degradation; glycolysis; D-glyceraldehyde 3-phosphate and glycerone phosphate from D-glucose: step 4/4. In terms of biological role, plays a key role in glycolysis and gluconeogenesis. In Thunnus albacares (Yellowfin tuna), this protein is Fructose-bisphosphate aldolase A.